The sequence spans 233 residues: tRNA (guanine-N(7)-)-methyltransferase (233 aa).

4 residues coordinate S-adenosyl-L-methionine: Glu64, Glu89, Asp116, and Asp138. Residue Asp138 is part of the active site. Residues Lys142, Asp174, and 212–215 (TRYE) contribute to the substrate site.

The protein belongs to the class I-like SAM-binding methyltransferase superfamily. TrmB family.

The enzyme catalyses guanosine(46) in tRNA + S-adenosyl-L-methionine = N(7)-methylguanosine(46) in tRNA + S-adenosyl-L-homocysteine. It participates in tRNA modification; N(7)-methylguanine-tRNA biosynthesis. Catalyzes the formation of N(7)-methylguanine at position 46 (m7G46) in tRNA. This chain is tRNA (guanine-N(7)-)-methyltransferase, found in Rhizobium johnstonii (strain DSM 114642 / LMG 32736 / 3841) (Rhizobium leguminosarum bv. viciae).